Consider the following 292-residue polypeptide: Elongation factor Ts (292 aa).

The involved in Mg(2+) ion dislocation from EF-Tu stretch occupies residues 82–85; the sequence is TDFV.

The protein belongs to the EF-Ts family.

Its subcellular location is the cytoplasm. Its function is as follows. Associates with the EF-Tu.GDP complex and induces the exchange of GDP to GTP. It remains bound to the aminoacyl-tRNA.EF-Tu.GTP complex up to the GTP hydrolysis stage on the ribosome. The chain is Elongation factor Ts from Bordetella petrii (strain ATCC BAA-461 / DSM 12804 / CCUG 43448).